The primary structure comprises 242 residues: MADGFSLNDALSGSGHPPNQGWPGPWGNQPAGPGGYPGAAYPGAYPGHAPGAYPGQAPPGPYPGPGAHGAYPGQPGGPGAYPSPGQPSGAGAYPGASPYSASAGPLPVPYDLPLPGGVMPRMLITIVGTVKPNANRLALDFKRGNDVAFHFNPRFNENNRRVIVCNTKVDNNWGREERQTTFPFEIGKPFKIQVLVEPDHFKVAVNDAHLLQYNHRMRNLKEINKLGISGDIQLTSASHAMI.

The tract at residues 1–35 is disordered; sequence MADGFSLNDALSGSGHPPNQGWPGPWGNQPAGPGG. The residue at position 2 (Ala-2) is an N-acetylalanine. Ser-6 is modified (phosphoserine; by CK1). Phosphoserine is present on Ser-12. The span at 17-31 shows a compositional bias: low complexity; that stretch reads PPNQGWPGPWGNQPA. Repeat copies occupy residues 35-43, 44-52, 53-61, and 62-70. The 7 X 9 AA tandem repeats of Y-P-G-X(3)-P-[GS]-A stretch occupies residues 35–98; the sequence is GYPGAAYPGA…GAGAYPGASP (64 aa). Positions 55 to 93 are disordered; the sequence is GQAPPGPYPGPGAHGAYPGQPGGPGAYPSPGQPSGAGAY. The stretch at 71–80 is one 5; approximate repeat; that stretch reads YPGQPGGPGA. A compositionally biased stretch (low complexity) spans 80–93; the sequence is AYPSPGQPSGAGAY. The 6; approximate repeat unit spans residues 81–92; that stretch reads YPSPGQPSGAGA. One copy of the 7; truncated repeat lies at 93–98; sequence YPGASP. Residues 110-240 form the Galectin domain; that stretch reads YDLPLPGGVM…DIQLTSASHA (131 aa). Residue 173-181 coordinates a beta-D-galactoside; that stretch reads WGREERQTT. The Nuclear export signal signature appears at 218 to 233; it reads RNLKEINKLGISGDIQ.

Probably forms homo- or heterodimers. Interacts with DMBT1. Interacts with CD6 and ALCAM. Forms a complex with the ITGA3, ITGB1 and CSPG4. Interacts with LGALS3BP, LYPD3, ZFTRAF1 and UACA. Interacts with TRIM16; this interaction mediates autophagy of damage endomembranes. Interacts with cargo receptor TMED10; the interaction mediates the translocation from the cytoplasm into the ERGIC (endoplasmic reticulum-Golgi intermediate compartment) and thereby secretion. Interacts with and inhibits by binding NCR3/NKp30.

The protein resides in the cytoplasm. It is found in the nucleus. The protein localises to the secreted. Functionally, galactose-specific lectin which binds IgE. May mediate with the alpha-3, beta-1 integrin the stimulation by CSPG4 of endothelial cells migration. Together with DMBT1, required for terminal differentiation of columnar epithelial cells during early embryogenesis. In the nucleus: acts as a pre-mRNA splicing factor. Involved in acute inflammatory responses including neutrophil activation and adhesion, chemoattraction of monocytes macrophages, opsonization of apoptotic neutrophils, and activation of mast cells. Together with TRIM16, coordinates the recognition of membrane damage with mobilization of the core autophagy regulators ATG16L1 and BECN1 in response to damaged endomembranes. When secreted, interacts with NK cell-activating receptor NCR3/NKp30 acting as an inhibitory ligand which antagonizes NK cell attack. The sequence is that of Galectin-3 (LGALS3) from Oryctolagus cuniculus (Rabbit).